The chain runs to 501 residues: Postreplication repair E3 ubiquitin-protein ligase rad18 (501 aa).

The segment at 34-72 adopts an RING-type zinc-finger fold; sequence CHVCKDFYDSPMLTSCNHTFCSLCIRRCLSVDSKCPLCR. The interval 111–154 is disordered; sequence QAILPDQAGPSSPSKRKATEMEGPKEEDPESKRPRRSTRSTRAR. A compositionally biased stretch (basic and acidic residues) spans 127–142; the sequence is KATEMEGPKEEDPESK. Over residues 143–152 the composition is skewed to basic residues; it reads RPRRSTRSTR. Residues 186–214 form a UBZ4-type zinc finger; that stretch reads LVACPICLTRMKEQQVDRHLDTSCPGSPQ. C189, C192, H204, and C209 together coordinate Zn(2+). The segment at 203–250 is disordered; the sequence is RHLDTSCPGSPQAASKRRPIPAQTPQPSTFPSFNTRLTSQTNQKPPER. A compositionally biased stretch (polar residues) spans 225 to 246; it reads QTPQPSTFPSFNTRLTSQTNQK. Residues 256 to 290 form the SAP domain; the sequence is YSMLRDTALRKKLSELGLSTHGSRQLLEKRHKEWI. Residues 377 to 501 are disordered; it reads IKRQTLDGNG…GMKKPNPETC (125 aa).

The protein belongs to the RAD18 family. In terms of assembly, interacts with E2 mus-8/ubc2, forming a complex with ubiquitin ligase activity.

Its subcellular location is the nucleus. It catalyses the reaction S-ubiquitinyl-[E2 ubiquitin-conjugating enzyme]-L-cysteine + [acceptor protein]-L-lysine = [E2 ubiquitin-conjugating enzyme]-L-cysteine + N(6)-ubiquitinyl-[acceptor protein]-L-lysine.. Its pathway is protein modification; protein ubiquitination. E3 RING-finger protein, member of the UBC2/RAD6 epistasis group. Associates to the E2 ubiquitin conjugating enzyme mus-8/ubc2 to form the mus-8/ubc2-uvs-2/rad18 ubiquitin ligase complex involved in postreplicative repair (PRR) of damaged DNA. This is Postreplication repair E3 ubiquitin-protein ligase rad18 (uvs-2) from Neurospora crassa (strain ATCC 24698 / 74-OR23-1A / CBS 708.71 / DSM 1257 / FGSC 987).